Reading from the N-terminus, the 1141-residue chain is DNA-directed RNA polymerase subunit beta (1141 aa).

Belongs to the RNA polymerase beta chain family. In terms of assembly, the RNAP catalytic core consists of 2 alpha, 1 beta, 1 beta' and 1 omega subunit. When a sigma factor is associated with the core the holoenzyme is formed, which can initiate transcription.

It catalyses the reaction RNA(n) + a ribonucleoside 5'-triphosphate = RNA(n+1) + diphosphate. Functionally, DNA-dependent RNA polymerase catalyzes the transcription of DNA into RNA using the four ribonucleoside triphosphates as substrates. The protein is DNA-directed RNA polymerase subunit beta of Parafrankia sp. (strain EAN1pec).